Reading from the N-terminus, the 243-residue chain is 1-(5-phosphoribosyl)-5-[(5-phosphoribosylamino)methylideneamino] imidazole-4-carboxamide isomerase (243 aa).

Aspartate 10 (proton acceptor) is an active-site residue. Aspartate 131 functions as the Proton donor in the catalytic mechanism.

This sequence belongs to the HisA/HisF family.

It is found in the cytoplasm. It carries out the reaction 1-(5-phospho-beta-D-ribosyl)-5-[(5-phospho-beta-D-ribosylamino)methylideneamino]imidazole-4-carboxamide = 5-[(5-phospho-1-deoxy-D-ribulos-1-ylimino)methylamino]-1-(5-phospho-beta-D-ribosyl)imidazole-4-carboxamide. It functions in the pathway amino-acid biosynthesis; L-histidine biosynthesis; L-histidine from 5-phospho-alpha-D-ribose 1-diphosphate: step 4/9. This Rhizorhabdus wittichii (strain DSM 6014 / CCUG 31198 / JCM 15750 / NBRC 105917 / EY 4224 / RW1) (Sphingomonas wittichii) protein is 1-(5-phosphoribosyl)-5-[(5-phosphoribosylamino)methylideneamino] imidazole-4-carboxamide isomerase.